Here is a 147-residue protein sequence, read N- to C-terminus: Interleukin-4 (147 aa).

The N-terminal stretch at 1–24 (MGLPAQLPVTLLCLLAGTAHFIQG) is a signal peptide. Cys-48 and Cys-88 are oxidised to a cystine. Asn-62 is a glycosylation site (N-linked (GlcNAc...) asparagine).

It belongs to the IL-4/IL-13 family.

It localises to the secreted. Its function is as follows. Participates in at least several B-cell activation processes as well as of other cell types. It is a costimulator of DNA-synthesis. It induces the expression of class II MHC molecules on resting B-cells. It enhances both secretion and cell surface expression of IgE and IgG1. It also regulates the expression of the low affinity Fc receptor for IgE (CD23) on both lymphocytes and monocytes. Positively regulates IL31RA expression in macrophages. Stimulates autophagy in dendritic cells by interfering with mTORC1 signaling and through the induction of RUFY4. The sequence is that of Interleukin-4 (IL4) from Oryctolagus cuniculus (Rabbit).